The sequence spans 78 residues: Major outer membrane lipoprotein Lpp (78 aa).

Residues 1-20 (MNRTKLVLGAVILASTMLAG) form the signal peptide. C21 carries N-palmitoyl cysteine lipidation. Residue C21 is the site of S-diacylglycerol cysteine attachment. 2 repeats span residues 24–34 (NAKIDQLSSDV) and 38–48 (NAKVDQLSNDV). Positions 27–75 (IDQLSSDVQTLNAKVDQLSNDVNAVRADVQAAKDDAARANQRLDNQAQA) form a coiled coil. At K78 the chain carries N6-murein peptidoglycan lysine.

This sequence belongs to the Lpp family. Homotrimer.

The protein resides in the cell outer membrane. The protein localises to the secreted. It localises to the cell wall. Its function is as follows. A highly abundant outer membrane lipoprotein that controls the distance between the inner and outer membranes. The only protein known to be covalently linked to the peptidoglycan network (PGN). Also non-covalently binds the PGN. The link between the cell outer membrane and PGN contributes to maintenance of the structural and functional integrity of the cell envelope, and maintains the correct distance between the PGN and the outer membrane. The polypeptide is Major outer membrane lipoprotein Lpp (Yersinia pestis).